We begin with the raw amino-acid sequence, 176 residues long: Large ribosomal subunit protein uL10 (176 aa).

The protein belongs to the universal ribosomal protein uL10 family. In terms of assembly, part of the ribosomal stalk of the 50S ribosomal subunit. The N-terminus interacts with L11 and the large rRNA to form the base of the stalk. The C-terminus forms an elongated spine to which L12 dimers bind in a sequential fashion forming a multimeric L10(L12)X complex.

Forms part of the ribosomal stalk, playing a central role in the interaction of the ribosome with GTP-bound translation factors. This is Large ribosomal subunit protein uL10 from Thioalkalivibrio sulfidiphilus (strain HL-EbGR7).